Consider the following 153-residue polypeptide: Superoxide dismutase [Cu-Zn] (153 aa).

Residues H45, H47, and H62 each contribute to the Cu cation site. C56 and C145 form a disulfide bridge. The Zn(2+) site is built by H62, H70, H79, and D82. H119 lines the Cu cation pocket.

The protein belongs to the Cu-Zn superoxide dismutase family. As to quaternary structure, homodimer. Cu cation is required as a cofactor. Requires Zn(2+) as cofactor.

The protein localises to the cytoplasm. It carries out the reaction 2 superoxide + 2 H(+) = H2O2 + O2. Its function is as follows. Destroys radicals which are normally produced within the cells and which are toxic to biological systems. This chain is Superoxide dismutase [Cu-Zn], found in Drosophila erecta (Fruit fly).